Reading from the N-terminus, the 440-residue chain is uncharacterized protein (440 aa).

Helical transmembrane passes span 1 to 21 (MLLV…QLYR), 29 to 49 (TVFI…SAFE), 70 to 90 (LLQM…IARI), 101 to 121 (VGVL…GIAM), 179 to 199 (TSII…LSLG), 226 to 246 (FVIR…AATS), 258 to 278 (IVAS…LLFF), 343 to 363 (IYPA…PFSF), 366 to 386 (ILTL…VGGG), and 389 to 409 (FAAI…GLLI).

The protein belongs to the dicarboxylate/amino acid:cation symporter (DAACS) (TC 2.A.23) family.

It is found in the cell membrane. This is an uncharacterized protein from Haemophilus influenzae (strain ATCC 51907 / DSM 11121 / KW20 / Rd).